We begin with the raw amino-acid sequence, 624 residues long: Plastin-2 (624 aa).

2 EF-hand domains span residues 9 to 44 (EEME…ANLP) and 49 to 84 (RVRE…LKSS). 10 residues coordinate Ca(2+): aspartate 22, aspartate 24, asparagine 26, histidine 28, glutamate 33, aspartate 62, asparagine 64, aspartate 66, lysine 68, and glutamate 73. 4 Calponin-homology (CH) domains span residues 118–234 (EEEK…KIGL), 262–373 (LSPE…NKYP), 392–501 (TREE…RRYT), and 513–621 (KIID…ARGM). Actin-binding regions lie at residues 118–373 (EEEK…NKYP) and 392–621 (TREE…ARGM).

As to quaternary structure, monomer. In terms of tissue distribution, expressed by macrophages (at protein level).

The protein localises to the cytoplasm. It localises to the cytoskeleton. The protein resides in the cell junction. It is found in the cell projection. Its subcellular location is the ruffle membrane. Actin-binding protein. Plays a role in the activation of T-cells. In Danio rerio (Zebrafish), this protein is Plastin-2.